The primary structure comprises 186 residues: Ribonuclease HII (186 aa).

The RNase H type-2 domain occupies 2–186 (KILAGVDEVG…KTFSPISDLL (185 aa)). A divalent metal cation is bound by residues D8, E9, and D99.

The protein belongs to the RNase HII family. Mn(2+) serves as cofactor. The cofactor is Mg(2+).

It localises to the cytoplasm. The catalysed reaction is Endonucleolytic cleavage to 5'-phosphomonoester.. Functionally, endonuclease that specifically degrades the RNA of RNA-DNA hybrids. This Pelagibacter ubique (strain HTCC1062) protein is Ribonuclease HII.